Here is a 350-residue protein sequence, read N- to C-terminus: S-adenosylmethionine:tRNA ribosyltransferase-isomerase (350 aa).

Belongs to the QueA family. In terms of assembly, monomer.

Its subcellular location is the cytoplasm. The catalysed reaction is 7-aminomethyl-7-carbaguanosine(34) in tRNA + S-adenosyl-L-methionine = epoxyqueuosine(34) in tRNA + adenine + L-methionine + 2 H(+). It functions in the pathway tRNA modification; tRNA-queuosine biosynthesis. Functionally, transfers and isomerizes the ribose moiety from AdoMet to the 7-aminomethyl group of 7-deazaguanine (preQ1-tRNA) to give epoxyqueuosine (oQ-tRNA). The chain is S-adenosylmethionine:tRNA ribosyltransferase-isomerase from Bacillus cytotoxicus (strain DSM 22905 / CIP 110041 / 391-98 / NVH 391-98).